The chain runs to 178 residues: Large ribosomal subunit protein uL6 (178 aa).

This sequence belongs to the universal ribosomal protein uL6 family. Part of the 50S ribosomal subunit.

In terms of biological role, this protein binds to the 23S rRNA, and is important in its secondary structure. It is located near the subunit interface in the base of the L7/L12 stalk, and near the tRNA binding site of the peptidyltransferase center. The protein is Large ribosomal subunit protein uL6 of Thermoplasma volcanium (strain ATCC 51530 / DSM 4299 / JCM 9571 / NBRC 15438 / GSS1).